A 190-amino-acid polypeptide reads, in one-letter code: Putative resolvase R80 (190 aa).

A DNA-binding region (H-T-H motif) is located at residues 11-30; sequence SSVLGVHQRTLYQWDKKGWI. One can recognise a Resolvase/invertase-type recombinase catalytic domain in the interval 61–190; it reads LSICYVRVSS…RNGSRKYSNK (130 aa). The stretch at 67–92 forms a coiled coil; it reads RVSSNSQKDDLERQIKFMKKKYPNHT. The active-site O-(5'-phospho-DNA)-serine intermediate is serine 69.

The protein belongs to the site-specific recombinase resolvase family.

Resolvase catalyzes the resolution (a site-specific recombination) of the cointegrated replicon to yield the final transposition products. This Acanthamoeba polyphaga mimivirus (APMV) protein is Putative resolvase R80.